The primary structure comprises 550 residues: Chaperonin GroEL (550 aa).

ATP-binding positions include 30–33 (TLGP), Lys51, 87–91 (DGTTT), Gly415, and Asp497.

This sequence belongs to the chaperonin (HSP60) family. In terms of assembly, forms a cylinder of 14 subunits composed of two heptameric rings stacked back-to-back. Interacts with the co-chaperonin GroES.

The protein resides in the cytoplasm. The catalysed reaction is ATP + H2O + a folded polypeptide = ADP + phosphate + an unfolded polypeptide.. In terms of biological role, together with its co-chaperonin GroES, plays an essential role in assisting protein folding. The GroEL-GroES system forms a nano-cage that allows encapsulation of the non-native substrate proteins and provides a physical environment optimized to promote and accelerate protein folding. This is Chaperonin GroEL from Yersinia enterocolitica.